Consider the following 264-residue polypeptide: Phosphoribosylaminoimidazole-succinocarboxamide synthase (264 aa).

Belongs to the SAICAR synthetase family.

The catalysed reaction is 5-amino-1-(5-phospho-D-ribosyl)imidazole-4-carboxylate + L-aspartate + ATP = (2S)-2-[5-amino-1-(5-phospho-beta-D-ribosyl)imidazole-4-carboxamido]succinate + ADP + phosphate + 2 H(+). It functions in the pathway purine metabolism; IMP biosynthesis via de novo pathway; 5-amino-1-(5-phospho-D-ribosyl)imidazole-4-carboxamide from 5-amino-1-(5-phospho-D-ribosyl)imidazole-4-carboxylate: step 1/2. The polypeptide is Phosphoribosylaminoimidazole-succinocarboxamide synthase (purC) (Synechocystis sp. (strain ATCC 27184 / PCC 6803 / Kazusa)).